Reading from the N-terminus, the 206-residue chain is Macrophage immunometabolism regulator (206 aa).

The residue at position 1 (M1) is an N-acetylmethionine. The disordered stretch occupies residues 1–41 (MEVDINGESRSTLTTLPFPGAEANSPGKAEAEKPRCSSTPC). 3 positions are modified to phosphoserine: S25, S140, and S167.

It belongs to the UNC119-binding protein family. As to quaternary structure, interacts with UNC119 and UNC119B; interaction preferentially takes place when UNC119 and UNC119B are unliganded with myristoylated proteins. In terms of processing, phosphorylated. High expression in normal macrophages, monocytes, and cultured rheumatoid arthritis synovial fibroblasts (RASFs), with lower expression in B- and T-cells, and little to no expression in other tissues and cell lines.

It is found in the cytoplasm. The protein resides in the cell projection. It localises to the cilium. Functionally, regulates the macrophage function, by enhancing the resolution of inflammation and wound repair functions mediated by M2 macrophages. The regulation of macrophage function is, due at least in part, to its ability to inhibit glycolysis. May also play a role in trafficking of proteins via its interaction with UNC119 and UNC119B cargo adapters: may help the release of UNC119 and UNC119B cargo or the recycling of UNC119 and UNC119B. May play a role in ciliary membrane localization via its interaction with UNC119B and protein transport into photoreceptor cells. The chain is Macrophage immunometabolism regulator from Homo sapiens (Human).